The primary structure comprises 57 residues: Amyloid-beta precursor protein (57 aa).

Over 1 to 33 the chain is Extracellular; that stretch reads SEVKMDAEFRHDSGYEVHHQKLVFFAEDVGSNK. The Cu(2+) site is built by His11, Tyr15, His18, and His19. Zn(2+) contacts are provided by His11, Tyr15, His18, and His19. A helical membrane pass occupies residues 34–57; it reads GAIIGLMVGGVVIATVIVITLVML.

Belongs to the APP family. In terms of assembly, binds, via its C-terminus, to the PID domain of several cytoplasmic proteins, including APBB family members, the APBA family, MAPK8IP1, SHC1 and NUMB and DAB1. Binding to DAB1 inhibits its serine phosphorylation. Interacts (via NPXY motif) with DAB2 (via PID domain); the interaction is impaired by tyrosine phosphorylation of the NPXY motif. Also interacts with GPCR-like protein BPP, APPBP1, IB1, KNS2 (via its TPR domains), APPBP2 (via BaSS) and DDB1. In vitro, it binds MAPT via the MT-binding domains. Associates with microtubules in the presence of ATP and in a kinesin-dependent manner. Interacts, through a C-terminal domain, with GNAO1. Interacts with CPEB1, ANKS1B, TNFRSF21 and AGER. Interacts with ITM2B. Interacts with ITM2C. Interacts with IDE. Can form homodimers; dimerization is enhanced in the presence of Cu(2+) ions. Can form homodimers; this is promoted by heparin binding. Interacts with SORL1 (via N-terminal ectodomain); this interaction retains APP in the trans-Golgi network and reduces processing into soluble APP-alpha and amyloid-beta peptides. Interacts with PLD3. Interacts with VDAC1. Interacts with NSG1; could regulate APP processing. Amyloid-beta protein 42 interacts with FPR2. Interacts with LRRK2. Interacts (via cytoplasmic domain) with KIF5B. Interacts (via C-terminus) with APBB2/FE65L1 (via C-terminus). Interacts (via intracellular domain) with APBB3. Post-translationally, proteolytically processed under normal cellular conditions. Cleavage either by alpha-secretase, beta-secretase or theta-secretase leads to generation and extracellular release of soluble APP peptides, S-APP-alpha and S-APP-beta, and the retention of corresponding membrane-anchored C-terminal fragments, C80, C83 and C99. Subsequent processing of C80 and C83 by gamma-secretase yields P3 peptides. This is the major secretory pathway and is non-amyloidogenic. Alternatively, presenilin/nicastrin-mediated gamma-secretase processing of C99 releases the amyloid-beta proteins, amyloid-beta protein 40 and amyloid-beta protein 42, major components of amyloid plaques, and the cytotoxic C-terminal fragments, gamma-CTF(50), gamma-CTF(57) and gamma-CTF(59). PSEN1 cleavage is more efficient with C83 than with C99 as substrate (in vitro). Amyloid-beta protein 40 and Amyloid-beta protein 42 are cleaved by ACE. Many other minor amyloid-beta peptides, amyloid-beta 1-X peptides, are found in cerebral spinal fluid (CSF) including the amyloid-beta X-15 peptides, produced from the cleavage by alpha-secretase.

Its subcellular location is the cell membrane. The protein localises to the membrane. It localises to the perikaryon. It is found in the cell projection. The protein resides in the growth cone. Its subcellular location is the clathrin-coated pit. The protein localises to the early endosome. It localises to the cytoplasmic vesicle. It is found in the secreted. The protein resides in the cell surface. Its subcellular location is the nucleus. The protein localises to the cytoplasm. Functionally, functions as a cell surface receptor and performs physiological functions on the surface of neurons relevant to neurite growth, neuronal adhesion and axonogenesis. Interaction between APP molecules on neighboring cells promotes synaptogenesis. Involved in cell mobility and transcription regulation through protein-protein interactions. Can promote transcription activation through binding to APBB1-KAT5 and inhibit Notch signaling through interaction with Numb. Couples to apoptosis-inducing pathways such as those mediated by G(o) and JIP. Inhibits G(o)-alpha ATPase activity. Acts as a kinesin I membrane receptor, mediating the axonal transport of beta-secretase and presenilin 1. By acting as a kinesin I membrane receptor, plays a role in axonal anterograde transport of cargo towards synapses in axons. May be involved in copper homeostasis/oxidative stress through copper ion reduction. In vitro, copper-metallated APP induces neuronal death directly or is potentiated through Cu(2+)-mediated low-density lipoprotein oxidation. Can regulate neurite outgrowth through binding to components of the extracellular matrix such as heparin and collagen I and IV. Induces a AGER-dependent pathway that involves activation of p38 MAPK, resulting in internalization of amyloid-beta peptide and mitochondrial dysfunction in cultured cortical neurons. Provides Cu(2+) ions for GPC1 which are required for release of nitric oxide (NO) and subsequent degradation of the heparan sulfate chains on GPC1. This is Amyloid-beta precursor protein (APP) from Ursus maritimus (Polar bear).